Reading from the N-terminus, the 242-residue chain is tRNA uridine(34) hydroxylase (242 aa).

The region spanning 128-222 is the Rhodanese domain; the sequence is DGREVVMLDT…YFEETGGPGY (95 aa). The Cysteine persulfide intermediate role is filled by Cys182.

Belongs to the TrhO family.

The enzyme catalyses uridine(34) in tRNA + AH2 + O2 = 5-hydroxyuridine(34) in tRNA + A + H2O. Catalyzes oxygen-dependent 5-hydroxyuridine (ho5U) modification at position 34 in tRNAs. The chain is tRNA uridine(34) hydroxylase from Bordetella avium (strain 197N).